Here is a 334-residue protein sequence, read N- to C-terminus: Guanine nucleotide-binding protein subunit beta-like protein (334 aa).

WD repeat units lie at residues 14–55 (GHKD…DSEF), 65–104 (GHSKRINGLDVSKDGNMMVTVGSDGIGRIWDTESKKSILL), 106–145 (GHGRDVLCVSINSNDTKIVTGSVDRTMNLYNTKGDLVLKM), 152–192 (MHRG…HLQT), 215–256 (DESK…QSFD), and 257–294 (AIVPVRSIAVGETEPVIALGTDESVIIWETISSRVIAS).

It belongs to the WD repeat G protein beta family.

The protein is Guanine nucleotide-binding protein subunit beta-like protein of Encephalitozoon cuniculi (strain GB-M1) (Microsporidian parasite).